Here is a 264-residue protein sequence, read N- to C-terminus: Low molecular mass lipoprotein PBMHPC-23 (264 aa).

The first 23 residues, 1–23, serve as a signal peptide directing secretion; sequence MKFLVVFAVVRACVTPACAEMSA.

It belongs to the 30 kDa lipoprotein family.

It is found in the secreted. The chain is Low molecular mass lipoprotein PBMHPC-23 from Bombyx mori (Silk moth).